The primary structure comprises 148 residues: uncharacterized protein (148 aa).

The interval 122–148 (HNWRKRMGTRRGRHEQSPTSRPRKGPD) is disordered. Residues 123–134 (NWRKRMGTRRGR) show a composition bias toward basic residues.

This is an uncharacterized protein from Homo sapiens (Human).